We begin with the raw amino-acid sequence, 291 residues long: UPF0276 protein VV3194 (291 aa).

The protein belongs to the UPF0276 family.

This Vibrio vulnificus (strain YJ016) protein is UPF0276 protein VV3194.